We begin with the raw amino-acid sequence, 282 residues long: Protein N-terminal and lysine N-methyltransferase efm7 (282 aa).

The segment covering 1–13 has biased composition (basic and acidic residues); that stretch reads MSKPEEVVNHVPE. A disordered region spans residues 1–32; that stretch reads MSKPEEVVNHVPEDEGSDIEAGGLFEDPPDFY. Residues Trp67, 93–95, Asp115, Trp152, and Ala179 each bind S-adenosyl-L-methionine; that span reads GAA.

The protein belongs to the class I-like SAM-binding methyltransferase superfamily. EFM7 family.

The protein resides in the cytoplasm. In terms of biological role, S-adenosyl-L-methionine-dependent protein methyltransferase that trimethylates the N-terminal glycine 'Gly-2' of elongation factor 1-alpha, before also catalyzing the mono- and dimethylation of 'Lys-3'. This chain is Protein N-terminal and lysine N-methyltransferase efm7 (nnt-1), found in Neurospora crassa (strain ATCC 24698 / 74-OR23-1A / CBS 708.71 / DSM 1257 / FGSC 987).